Consider the following 303-residue polypeptide: Protoheme IX farnesyltransferase (303 aa).

9 helical membrane-spanning segments follow: residues 30–50 (VMSL…STVS), 54–74 (AMIA…LNMW), 101–121 (ALIF…YFAN), 123–143 (ISAV…TIWL), 150–170 (NIVI…TIAT), 178–198 (ITFF…LSLY), 219–241 (STKI…PYAI), 245–262 (GLVF…YNIL), and 279–299 (AKTI…IFLI).

Belongs to the UbiA prenyltransferase family. Protoheme IX farnesyltransferase subfamily.

It is found in the cell inner membrane. It catalyses the reaction heme b + (2E,6E)-farnesyl diphosphate + H2O = Fe(II)-heme o + diphosphate. Its pathway is porphyrin-containing compound metabolism; heme O biosynthesis; heme O from protoheme: step 1/1. Its function is as follows. Converts heme B (protoheme IX) to heme O by substitution of the vinyl group on carbon 2 of heme B porphyrin ring with a hydroxyethyl farnesyl side group. The protein is Protoheme IX farnesyltransferase of Pelagibacter ubique (strain HTCC1062).